We begin with the raw amino-acid sequence, 280 residues long: Polyamine aminopropyltransferase 2 (280 aa).

Residues 2–237 enclose the PABS domain; sequence ELWLDEALEL…GIIGFTYCSK (236 aa). An S-methyl-5'-thioadenosine-binding site is contributed by glutamine 33. Residues histidine 64 and aspartate 88 each coordinate spermidine. Residues glutamate 108 and 139-140 each bind S-methyl-5'-thioadenosine; that span reads DG. Aspartate 157 (proton acceptor) is an active-site residue. 157–160 is a spermidine binding site; that stretch reads DSSD. Proline 164 serves as a coordination point for S-methyl-5'-thioadenosine.

Belongs to the spermidine/spermine synthase family. As to quaternary structure, homodimer or homotetramer.

It localises to the cytoplasm. It carries out the reaction S-adenosyl 3-(methylsulfanyl)propylamine + putrescine = S-methyl-5'-thioadenosine + spermidine + H(+). It participates in amine and polyamine biosynthesis; spermidine biosynthesis; spermidine from putrescine: step 1/1. Its function is as follows. Catalyzes the irreversible transfer of a propylamine group from the amino donor S-adenosylmethioninamine (decarboxy-AdoMet) to putrescine (1,4-diaminobutane) to yield spermidine. The chain is Polyamine aminopropyltransferase 2 from Leptospira interrogans serogroup Icterohaemorrhagiae serovar Lai (strain 56601).